A 440-amino-acid polypeptide reads, in one-letter code: Fibulin-7 (440 aa).

Residues 1–24 (MGPGSQRALFLLLLLLASPGARAF) form the signal peptide. The stretch at 28–73 (LNKQQLLTTIRQLQQLLKGQETRFTEGIRNMKSRLAALQNTVNKMT) forms a coiled coil. The 58-residue stretch at 79–136 (VSCPALEAPPDGKKFGSKYLVDHEVYFTCNPGFQLVGPSSVVCLANGSWTGEQPRCRD) folds into the Sushi domain. 11 disulfide bridges follow: cysteine 81-cysteine 121, cysteine 107-cysteine 134, cysteine 140-cysteine 151, cysteine 145-cysteine 160, cysteine 162-cysteine 171, cysteine 229-cysteine 245, cysteine 241-cysteine 254, cysteine 256-cysteine 269, cysteine 275-cysteine 288, cysteine 282-cysteine 297, and cysteine 302-cysteine 319. N-linked (GlcNAc...) asparagine glycosylation occurs at asparagine 124. An EGF-like 1; calcium-binding domain is found at 136 to 172 (DISECSSQPCHNGGTCVEGINHYRCICPPGKTGNRCQ). The region spanning 225–270 (DVNECEIYGQKGRPRLCMHACVNTPGSYRCTCPSGYRILADGKSCE) is the EGF-like 2; calcium-binding domain. One can recognise an EGF-like 3; calcium-binding domain in the interval 271 to 320 (DVDECAGPQHMCPRGTTCINTGGGFQCVNPECPEGSGNISYVKTSPFQCE). The N-linked (GlcNAc...) asparagine glycan is linked to asparagine 308.

The protein belongs to the fibulin family. Interacts with heparin, FBLN1, FN1 and DSPP. Preferentially binds dental mesenchyme cells and odontoblasts but not dental epithelial cells or nondental cells. Binding requires a heparan sulfate-containing receptor on the cell surface as well as an integrin. N-glycosylated. As to expression, highly expressed in newborn incisors and molars. A weaker expression is seen in the brain, kidneys, muscles and bones.

It localises to the secreted. It is found in the extracellular space. Its subcellular location is the extracellular matrix. In terms of biological role, an adhesion molecule that interacts with extracellular matrix molecules in developing teeth and may play important roles in differentiation and maintenance of odontoblasts as well as in dentin formation. This chain is Fibulin-7 (Fbln7), found in Mus musculus (Mouse).